The sequence spans 371 residues: Aspartate-semialdehyde dehydrogenase (371 aa).

Residues 10–13 (RGMV), 37–38 (TS), and Q74 contribute to the NADP(+) site. R103 contributes to the phosphate binding site. The active-site Acyl-thioester intermediate is the C136. Q163 contacts substrate. S166 is an NADP(+) binding site. A substrate-binding site is contributed by E243. Residue K246 coordinates phosphate. R270 provides a ligand contact to substrate. Residue H277 is the Proton acceptor of the active site. Q353 lines the NADP(+) pocket.

Belongs to the aspartate-semialdehyde dehydrogenase family. As to quaternary structure, homodimer.

It catalyses the reaction L-aspartate 4-semialdehyde + phosphate + NADP(+) = 4-phospho-L-aspartate + NADPH + H(+). It functions in the pathway amino-acid biosynthesis; L-lysine biosynthesis via DAP pathway; (S)-tetrahydrodipicolinate from L-aspartate: step 2/4. The protein operates within amino-acid biosynthesis; L-methionine biosynthesis via de novo pathway; L-homoserine from L-aspartate: step 2/3. Its pathway is amino-acid biosynthesis; L-threonine biosynthesis; L-threonine from L-aspartate: step 2/5. Functionally, catalyzes the NADPH-dependent formation of L-aspartate-semialdehyde (L-ASA) by the reductive dephosphorylation of L-aspartyl-4-phosphate. The sequence is that of Aspartate-semialdehyde dehydrogenase from Haemophilus influenzae (strain ATCC 51907 / DSM 11121 / KW20 / Rd).